Consider the following 281-residue polypeptide: Large ribosomal subunit protein uL2 (281 aa).

Residues 222–281 (TVRGSVMNPNDHPHGGGEGRTPIGRKSPVTPWGKKALGVKTRNTKKPSEKLIVRKRNAKK) are disordered.

Belongs to the universal ribosomal protein uL2 family. In terms of assembly, part of the 50S ribosomal subunit. Forms a bridge to the 30S subunit in the 70S ribosome.

In terms of biological role, one of the primary rRNA binding proteins. Required for association of the 30S and 50S subunits to form the 70S ribosome, for tRNA binding and peptide bond formation. It has been suggested to have peptidyltransferase activity; this is somewhat controversial. Makes several contacts with the 16S rRNA in the 70S ribosome. The sequence is that of Large ribosomal subunit protein uL2 from Mesoplasma florum (strain ATCC 33453 / NBRC 100688 / NCTC 11704 / L1) (Acholeplasma florum).